Consider the following 23-residue polypeptide: Coenzyme PQQ synthesis protein A (23 aa).

The pyrroloquinoline quinone (Glu-Tyr) cross-link spans 15–19; that stretch reads EVTLY.

Belongs to the PqqA family.

It functions in the pathway cofactor biosynthesis; pyrroloquinoline quinone biosynthesis. Required for coenzyme pyrroloquinoline quinone (PQQ) biosynthesis. PQQ is probably formed by cross-linking a specific glutamate to a specific tyrosine residue and excising these residues from the peptide. In Pseudomonas aeruginosa (strain UCBPP-PA14), this protein is Coenzyme PQQ synthesis protein A.